We begin with the raw amino-acid sequence, 219 residues long: Large ribosomal subunit protein uL3 (219 aa).

Belongs to the universal ribosomal protein uL3 family. Part of the 50S ribosomal subunit. Forms a cluster with proteins L14 and L19.

Functionally, one of the primary rRNA binding proteins, it binds directly near the 3'-end of the 23S rRNA, where it nucleates assembly of the 50S subunit. The polypeptide is Large ribosomal subunit protein uL3 (Corynebacterium kroppenstedtii (strain DSM 44385 / JCM 11950 / CIP 105744 / CCUG 35717)).